The sequence spans 386 residues: Bifunctional enzyme IspD/IspF (386 aa).

The 2-C-methyl-D-erythritol 4-phosphate cytidylyltransferase stretch occupies residues 1–226 (MATPSPLPSF…EDFMADLLPV (226 aa)). A 2-C-methyl-D-erythritol 2,4-cyclodiphosphate synthase region spans residues 227 to 386 (RVGTGFDVHK…ATVVRKDTPA (160 aa)). Positions 233 and 235 each coordinate a divalent metal cation. 4-CDP-2-C-methyl-D-erythritol 2-phosphate contacts are provided by residues 233–235 (DVH) and 259–260 (HS). An a divalent metal cation-binding site is contributed by H267. Residues 281-283 (DIG), 357-360 (TTTE), F364, and R367 each bind 4-CDP-2-C-methyl-D-erythritol 2-phosphate.

This sequence in the N-terminal section; belongs to the IspD/TarI cytidylyltransferase family. IspD subfamily. The protein in the C-terminal section; belongs to the IspF family. The cofactor is a divalent metal cation.

The catalysed reaction is 2-C-methyl-D-erythritol 4-phosphate + CTP + H(+) = 4-CDP-2-C-methyl-D-erythritol + diphosphate. It carries out the reaction 4-CDP-2-C-methyl-D-erythritol 2-phosphate = 2-C-methyl-D-erythritol 2,4-cyclic diphosphate + CMP. The protein operates within isoprenoid biosynthesis; isopentenyl diphosphate biosynthesis via DXP pathway; isopentenyl diphosphate from 1-deoxy-D-xylulose 5-phosphate: step 2/6. Its pathway is isoprenoid biosynthesis; isopentenyl diphosphate biosynthesis via DXP pathway; isopentenyl diphosphate from 1-deoxy-D-xylulose 5-phosphate: step 4/6. Bifunctional enzyme that catalyzes the formation of 4-diphosphocytidyl-2-C-methyl-D-erythritol from CTP and 2-C-methyl-D-erythritol 4-phosphate (MEP) (IspD), and catalyzes the conversion of 4-diphosphocytidyl-2-C-methyl-D-erythritol 2-phosphate (CDP-ME2P) to 2-C-methyl-D-erythritol 2,4-cyclodiphosphate (ME-CPP) with a corresponding release of cytidine 5-monophosphate (CMP) (IspF). This Erythrobacter litoralis (strain HTCC2594) protein is Bifunctional enzyme IspD/IspF.